A 559-amino-acid chain; its full sequence is NXPE family member 3 (559 aa).

The first 30 residues, 1 to 30 (MWTNFFKLRLFCCLLAVLMVVVLVVNVTQV), serve as a signal peptide directing secretion. Asparagine 26, asparagine 237, and asparagine 346 each carry an N-linked (GlcNAc...) asparagine glycan.

The protein belongs to the NXPE family.

Its subcellular location is the secreted. The sequence is that of NXPE family member 3 (NXPE3) from Pongo abelii (Sumatran orangutan).